The chain runs to 590 residues: uncharacterized protein (590 aa).

Topologically, residues 1–68 (MKFSKPKFSM…SQRVWGPWNY (68 aa)) are cytoplasmic. The chain crosses the membrane as a helical span at residues 69–89 (VAFWLADSVNVNTWMIAGTAV). At 90 to 94 (ESGLS) the chain is on the extracellular side. A helical membrane pass occupies residues 95-115 (WWEAWITVWVGYTIAAFILTI). Residues 116 to 124 (AGRAGAVYH) are Cytoplasmic-facing. The chain crosses the membrane as a helical span at residues 125 to 145 (ISFPVLSRSSFGIWGSLWPIL). Residues 146-149 (NRAV) are Extracellular-facing. The helical transmembrane segment at 150–170 (MACVWYGVQAWIGGECVTLMI) threads the bilayer. Topologically, residues 171-194 (RSIWPSFSHIPNTMAKSGTETYQW) are cytoplasmic. Residues 195-215 (VGFFIFWLISNVAIWFPVYQI) form a helical membrane-spanning segment. The Extracellular segment spans residues 216 to 218 (RHL). A helical transmembrane segment spans residues 219 to 239 (FTAKSFLAPPAAIAFLIWALV). Topologically, residues 240-258 (KAHGAGDAIHAKTQLSTWN) are cytoplasmic. The chain crosses the membrane as a helical span at residues 259 to 279 (HGWAVTAGIISCLDNFATLIV). Over 280 to 298 (NNPDFTRFATTPNAPIFPQ) the chain is Extracellular. Residues 299-319 (LITIPMGFGITTLIGVLVGSA) traverse the membrane as a helical segment. Residues 320-390 (SKSIYGENIW…LCPMFINIRR (71 aa)) lie on the Cytoplasmic side of the membrane. The chain crosses the membrane as a helical span at residues 391 to 411 (GGYIASIIGICMCPWNLLSSS). At 412–418 (NSFANSL) the chain is on the extracellular side. The chain crosses the membrane as a helical span at residues 419–439 (SAYAVFLSSFAGILIADYFVI). Topologically, residues 440–467 (RKGYLKVDALYTINPNEPYWFTYGINLR) are cytoplasmic. Residues 468–488 (AFASYICGLLINVVGLAGAVG) form a helical membrane-spanning segment. Over 489–500 (DKVPKAALTMNN) the chain is Extracellular. Residues 501 to 521 (IAYLLGIVTSFLSHLIICKIF) form a helical membrane-spanning segment. Residues 522 to 590 (PVTACGEKFL…GIDIKESSVF (69 aa)) are Cytoplasmic-facing. The interval 566–590 (VSYDSKEKSDDGKSGGIDIKESSVF) is disordered.

It belongs to the purine-cytosine permease (2.A.39) family.

Its subcellular location is the cytoplasm. It is found in the nucleus. The protein localises to the membrane. This is an uncharacterized protein from Schizosaccharomyces pombe (strain 972 / ATCC 24843) (Fission yeast).